A 197-amino-acid polypeptide reads, in one-letter code: Phosphoheptose isomerase (197 aa).

One can recognise an SIS domain in the interval 36–197; it reads MVNALLNEGK…IDSQLFGSEE (162 aa). 51 to 53 contacts substrate; the sequence is NGG. Residues H60 and E64 each coordinate Zn(2+). Residues E64, 93–94, 119–121, S124, and Q174 contribute to the substrate site; these read ND and STS. Zn(2+) contacts are provided by Q174 and H182.

It belongs to the SIS family. GmhA subfamily. As to quaternary structure, homotetramer. The cofactor is Zn(2+).

The protein localises to the cytoplasm. It catalyses the reaction 2 D-sedoheptulose 7-phosphate = D-glycero-alpha-D-manno-heptose 7-phosphate + D-glycero-beta-D-manno-heptose 7-phosphate. It functions in the pathway carbohydrate biosynthesis; D-glycero-D-manno-heptose 7-phosphate biosynthesis; D-glycero-alpha-D-manno-heptose 7-phosphate and D-glycero-beta-D-manno-heptose 7-phosphate from sedoheptulose 7-phosphate: step 1/1. Catalyzes the isomerization of sedoheptulose 7-phosphate in D-glycero-D-manno-heptose 7-phosphate. The sequence is that of Phosphoheptose isomerase from Pseudomonas putida (strain W619).